The chain runs to 103 residues: Pyrimidine/purine nucleoside phosphorylase (103 aa).

Belongs to the nucleoside phosphorylase PpnP family.

It carries out the reaction a purine D-ribonucleoside + phosphate = a purine nucleobase + alpha-D-ribose 1-phosphate. The enzyme catalyses adenosine + phosphate = alpha-D-ribose 1-phosphate + adenine. It catalyses the reaction cytidine + phosphate = cytosine + alpha-D-ribose 1-phosphate. The catalysed reaction is guanosine + phosphate = alpha-D-ribose 1-phosphate + guanine. It carries out the reaction inosine + phosphate = alpha-D-ribose 1-phosphate + hypoxanthine. The enzyme catalyses thymidine + phosphate = 2-deoxy-alpha-D-ribose 1-phosphate + thymine. It catalyses the reaction uridine + phosphate = alpha-D-ribose 1-phosphate + uracil. The catalysed reaction is xanthosine + phosphate = alpha-D-ribose 1-phosphate + xanthine. Catalyzes the phosphorolysis of diverse nucleosides, yielding D-ribose 1-phosphate and the respective free bases. Can use uridine, adenosine, guanosine, cytidine, thymidine, inosine and xanthosine as substrates. Also catalyzes the reverse reactions. The chain is Pyrimidine/purine nucleoside phosphorylase from Laribacter hongkongensis (strain HLHK9).